The primary structure comprises 267 residues: MQEFTNPFPIGSSSLIHCMTNEISCEMLANGILALGCKPVMADDSREVLDFTKQSQALFINLGHLSAEKEKAIRMAASYANQSSLPMVVDAVGVTTSSIRKSLVKDLLDYRPTVLKGNMSEIRSLVGLKHHGVGVDASAKDQETEDLLQVLKDWCQTYPGMSFLVTGPKDLIVSKNQVAVLENGCTELDWITGTGDLVGALTAVFLSQGKTGFEASCLAVSYLNIAAEKIVVQGMGLEEFRYQVLNQLSLLRRDENWLDTIKGEVYE.

Substrate is bound at residue M41. Positions 116 and 166 each coordinate ATP. Substrate is bound at residue G193.

Belongs to the Thz kinase family. Requires Mg(2+) as cofactor.

The enzyme catalyses 5-(2-hydroxyethyl)-4-methylthiazole + ATP = 4-methyl-5-(2-phosphooxyethyl)-thiazole + ADP + H(+). The protein operates within cofactor biosynthesis; thiamine diphosphate biosynthesis; 4-methyl-5-(2-phosphoethyl)-thiazole from 5-(2-hydroxyethyl)-4-methylthiazole: step 1/1. Functionally, catalyzes the phosphorylation of the hydroxyl group of 4-methyl-5-beta-hydroxyethylthiazole (THZ). The protein is Hydroxyethylthiazole kinase 2 of Streptococcus pneumoniae (strain Hungary19A-6).